The following is a 407-amino-acid chain: Probable 2,3-bisphosphoglycerate-independent phosphoglycerate mutase (407 aa).

The disordered stretch occupies residues 175 to 200 (GSDAINDTDPQQVGKEPLEPKGENPN).

This sequence belongs to the BPG-independent phosphoglycerate mutase family. A-PGAM subfamily.

The catalysed reaction is (2R)-2-phosphoglycerate = (2R)-3-phosphoglycerate. The protein operates within carbohydrate degradation; glycolysis; pyruvate from D-glyceraldehyde 3-phosphate: step 3/5. Catalyzes the interconversion of 2-phosphoglycerate and 3-phosphoglycerate. This Aquifex aeolicus (strain VF5) protein is Probable 2,3-bisphosphoglycerate-independent phosphoglycerate mutase.